Reading from the N-terminus, the 311-residue chain is Ribosomal RNA small subunit methyltransferase H (311 aa).

S-adenosyl-L-methionine is bound by residues 35–37 (GGH), Asp55, Phe80, Asp102, and Gln109.

The protein belongs to the methyltransferase superfamily. RsmH family.

Its subcellular location is the cytoplasm. It catalyses the reaction cytidine(1402) in 16S rRNA + S-adenosyl-L-methionine = N(4)-methylcytidine(1402) in 16S rRNA + S-adenosyl-L-homocysteine + H(+). Functionally, specifically methylates the N4 position of cytidine in position 1402 (C1402) of 16S rRNA. This is Ribosomal RNA small subunit methyltransferase H from Pseudoalteromonas atlantica (strain T6c / ATCC BAA-1087).